A 218-amino-acid polypeptide reads, in one-letter code: GTP cyclohydrolase 1 (218 aa).

The Zn(2+) site is built by Cys109, His112, and Cys180.

This sequence belongs to the GTP cyclohydrolase I family. As to quaternary structure, toroid-shaped homodecamer, composed of two pentamers of five dimers.

It catalyses the reaction GTP + H2O = 7,8-dihydroneopterin 3'-triphosphate + formate + H(+). It functions in the pathway cofactor biosynthesis; 7,8-dihydroneopterin triphosphate biosynthesis; 7,8-dihydroneopterin triphosphate from GTP: step 1/1. The chain is GTP cyclohydrolase 1 from Aeromonas hydrophila subsp. hydrophila (strain ATCC 7966 / DSM 30187 / BCRC 13018 / CCUG 14551 / JCM 1027 / KCTC 2358 / NCIMB 9240 / NCTC 8049).